The sequence spans 368 residues: Ribosomal RNA large subunit methyltransferase M (368 aa).

S-adenosyl-L-methionine contacts are provided by residues Ser189, 222–225 (CPGG), Asp241, Asp261, and Asp278. Lys307 serves as the catalytic Proton acceptor.

Belongs to the class I-like SAM-binding methyltransferase superfamily. RNA methyltransferase RlmE family. RlmM subfamily. In terms of assembly, monomer.

It is found in the cytoplasm. The enzyme catalyses cytidine(2498) in 23S rRNA + S-adenosyl-L-methionine = 2'-O-methylcytidine(2498) in 23S rRNA + S-adenosyl-L-homocysteine + H(+). Functionally, catalyzes the 2'-O-methylation at nucleotide C2498 in 23S rRNA. The polypeptide is Ribosomal RNA large subunit methyltransferase M (Yersinia pestis bv. Antiqua (strain Angola)).